A 231-amino-acid polypeptide reads, in one-letter code: Ribonuclease 3 (231 aa).

In terms of domain architecture, RNase III spans 5-134; sequence QEKLKNDYGL…FLGALFIDQG (130 aa). Position 47 (glutamate 47) interacts with Mg(2+). Residue aspartate 51 is part of the active site. Residues asparagine 120 and glutamate 123 each contribute to the Mg(2+) site. The active site involves glutamate 123. In terms of domain architecture, DRBM spans 160–229; sequence DYKTELQEVL…AENAIKGQNH (70 aa).

Belongs to the ribonuclease III family. As to quaternary structure, homodimer. The cofactor is Mg(2+).

The protein localises to the cytoplasm. The catalysed reaction is Endonucleolytic cleavage to 5'-phosphomonoester.. In terms of biological role, digests double-stranded RNA. Involved in the processing of primary rRNA transcript to yield the immediate precursors to the large and small rRNAs (23S and 16S). Processes some mRNAs, and tRNAs when they are encoded in the rRNA operon. Processes pre-crRNA and tracrRNA of type II CRISPR loci if present in the organism. This is Ribonuclease 3 from Lactococcus lactis subsp. cremoris (strain SK11).